Reading from the N-terminus, the 116-residue chain is MYAPLFVAIGGFFGAMARYLVSRWAARRSPRFPLGTLIVNLLGSFLLGWLAGSGAADAAKLLVGTGFMGAFTTFSTLKWESVQMMQQRQWAKVVVYLAATYLCGVWLAWLGYHVGR.

Helical transmembrane passes span 1–21 (MYAP…RYLV), 32–52 (FPLG…WLAG), 54–74 (GAAD…FTTF), and 93–113 (VVVY…LGYH). 2 residues coordinate Na(+): Gly69 and Thr72.

This sequence belongs to the fluoride channel Fluc/FEX (TC 1.A.43) family.

The protein resides in the cell membrane. It catalyses the reaction fluoride(in) = fluoride(out). Na(+) is not transported, but it plays an essential structural role and its presence is essential for fluoride channel function. Fluoride-specific ion channel. Important for reducing fluoride concentration in the cell, thus reducing its toxicity. This is Fluoride-specific ion channel FluC 1 from Geobacillus kaustophilus (strain HTA426).